A 940-amino-acid polypeptide reads, in one-letter code: Isoleucine--tRNA ligase (940 aa).

The 'HIGH' region motif lies at 58-68; sequence PYANGSIHIGH. Glu564 is an L-isoleucyl-5'-AMP binding site. The short motif at 605–609 is the 'KMSKS' region element; it reads KMSKS. Position 608 (Lys608) interacts with ATP. Residues Cys903, Cys906, Cys923, and Cys926 each contribute to the Zn(2+) site.

It belongs to the class-I aminoacyl-tRNA synthetase family. IleS type 1 subfamily. Monomer. It depends on Zn(2+) as a cofactor.

Its subcellular location is the cytoplasm. It catalyses the reaction tRNA(Ile) + L-isoleucine + ATP = L-isoleucyl-tRNA(Ile) + AMP + diphosphate. In terms of biological role, catalyzes the attachment of isoleucine to tRNA(Ile). As IleRS can inadvertently accommodate and process structurally similar amino acids such as valine, to avoid such errors it has two additional distinct tRNA(Ile)-dependent editing activities. One activity is designated as 'pretransfer' editing and involves the hydrolysis of activated Val-AMP. The other activity is designated 'posttransfer' editing and involves deacylation of mischarged Val-tRNA(Ile). This is Isoleucine--tRNA ligase from Shewanella sp. (strain ANA-3).